The primary structure comprises 254 residues: Small ribosomal subunit protein uS2 (254 aa).

Basic and acidic residues predominate over residues 228-248; sequence RKERKGQDAEEELKKASEPKA. Positions 228-254 are disordered; that stretch reads RKERKGQDAEEELKKASEPKAAEAAAE.

Belongs to the universal ribosomal protein uS2 family.

This Nitratidesulfovibrio vulgaris (strain ATCC 29579 / DSM 644 / CCUG 34227 / NCIMB 8303 / VKM B-1760 / Hildenborough) (Desulfovibrio vulgaris) protein is Small ribosomal subunit protein uS2.